Here is a 1216-residue protein sequence, read N- to C-terminus: FK506-binding protein 15 (1216 aa).

Position 1 is an N-acetylmethionine (M1). A phosphoserine mark is found at S14 and S23. Positions 41–68 are disordered; that stretch reads YTAPKQPKKGQGTAAGNQTAPKPAPATT. Residues 59-68 are compositionally biased toward low complexity; it reads TAPKPAPATT. The segment at 71–168 is important for function in growth cone organization; sequence SSVLFATAVH…AVSFNKQVCV (98 aa). N6-acetyllysine is present on K91. A PPIase FKBP-type domain is found at 196–289; it reads GDSLEVAYTG…VFEVEVRRVK (94 aa). Residues 292-357 are disordered; sequence RDSGSDGHSV…QLTVNSNPDT (66 aa). Over residues 303-322 the composition is skewed to low complexity; that stretch reads SRDSAAPSPIPASDSLSADP. Phosphoserine occurs at positions 306, 310, 342, 344, and 617. Polar residues predominate over residues 340–356; it reads SKSNSLSEQLTVNSNPD. Coiled-coil stretches lie at residues 519 to 790 and 820 to 865; these read MAVN…AAAE and QQYR…RLEK. A disordered region spans residues 927–1216; it reads HQEEEEEEEE…DDDDDIGWLG (290 aa). The span at 929–940 shows a compositional bias: acidic residues; that stretch reads EEEEEEEEEEEE. Residue S948 is modified to Phosphoserine. Over residues 954–964 the composition is skewed to pro residues; sequence PATPGMPPAPP. Residues 983–994 show a composition bias toward low complexity; that stretch reads TTPLPLQALPTP. Position 1018 is a phosphoserine (S1018). Pro residues predominate over residues 1036–1045; the sequence is TSIPPKPPGP. Phosphoserine is present on residues S1050 and S1091. T1093 carries the post-translational modification Phosphothreonine. A phosphoserine mark is found at S1108, S1153, S1157, S1159, and S1190. Position 1198 is a phosphothreonine (T1198). Acidic residues predominate over residues 1202–1216; that stretch reads GDDDDDDDDDIGWLG.

Belongs to the FKBP-type PPIase family. As to quaternary structure, interacts with WIP and actin. Interacts with TBC1D23. Expressed in brain, with highest levels in the granular cell layer of cerebellum and in the granule cell layer of dentate gyrus.

The protein resides in the cytoplasm. Its subcellular location is the cell projection. The protein localises to the axon. It is found in the early endosome. In terms of biological role, involved in the transport of early endosomes at the level of transition between microfilament-based and microtubule-based movement. May be involved in the cytoskeletal organization of neuronal growth cones. Seems to be inactive as a PPIase. In Mus musculus (Mouse), this protein is FK506-binding protein 15 (Fkbp15).